Consider the following 313-residue polypeptide: Probable cell division protein WhiA (313 aa).

The segment at residues 280 to 313 is a DNA-binding region (H-T-H motif); that stretch reads SLKELGAMLNPPIGKSGVNHRLKKLCSIADGLRQ.

The protein belongs to the WhiA family.

Involved in cell division and chromosome segregation. The chain is Probable cell division protein WhiA from Lachnoclostridium phytofermentans (strain ATCC 700394 / DSM 18823 / ISDg) (Clostridium phytofermentans).